The following is a 210-amino-acid chain: 7-carboxy-7-deazaguanine synthase (210 aa).

Substrate-binding positions include 12–14 (LQG) and Arg-27. Positions 18-210 (HAGRASVFCR…VQTHKSLGIR (193 aa)) constitute a Radical SAM core domain. The [4Fe-4S] cluster site is built by Cys-31, Cys-46, and Cys-49. A Mg(2+)-binding site is contributed by Thr-51. Substrate is bound at residue Thr-90. Residues Gly-92, 133–135 (SPK), and 173–176 (QPMD) contribute to the S-adenosyl-L-methionine site.

It belongs to the radical SAM superfamily. 7-carboxy-7-deazaguanine synthase family. In terms of assembly, homodimer. Requires [4Fe-4S] cluster as cofactor. The cofactor is S-adenosyl-L-methionine. Mg(2+) is required as a cofactor.

The catalysed reaction is 6-carboxy-5,6,7,8-tetrahydropterin + H(+) = 7-carboxy-7-deazaguanine + NH4(+). Its pathway is purine metabolism; 7-cyano-7-deazaguanine biosynthesis. Catalyzes the complex heterocyclic radical-mediated conversion of 6-carboxy-5,6,7,8-tetrahydropterin (CPH4) to 7-carboxy-7-deazaguanine (CDG), a step common to the biosynthetic pathways of all 7-deazapurine-containing compounds. This Bradyrhizobium diazoefficiens (strain JCM 10833 / BCRC 13528 / IAM 13628 / NBRC 14792 / USDA 110) protein is 7-carboxy-7-deazaguanine synthase.